Here is a 553-residue protein sequence, read N- to C-terminus: Arginine--tRNA ligase (553 aa).

The 'HIGH' region motif lies at 123–133; it reads ANPTGPLTIGR.

It belongs to the class-I aminoacyl-tRNA synthetase family. In terms of assembly, monomer.

It localises to the cytoplasm. The catalysed reaction is tRNA(Arg) + L-arginine + ATP = L-arginyl-tRNA(Arg) + AMP + diphosphate. The chain is Arginine--tRNA ligase from Chlorobium phaeobacteroides (strain BS1).